The following is a 2167-amino-acid chain: SH3 and multiple ankyrin repeat domains protein 1 (2167 aa).

A disordered region spans residues 1 to 63; it reads MTHSPATSED…TRGLQGRSMS (63 aa). Residues 17-32 are compositionally biased toward low complexity; sequence SECPEGGSESDSSPDG. A compositionally biased stretch (gly residues) spans 33 to 47; that stretch reads PGRGPQGTRGRGSGA. Arg-43 is subject to Omega-N-methylarginine. Tyr-186 carries the phosphotyrosine modification. ANK repeat units follow at residues 195-210, 212-245, 246-278, 279-312, 313-345, 346-378, and 379-395; these read VARL…YHDS, SGET…FRAR, DGMT…YKDR, RGLT…IADE, NGWQ…AQNA, SGNT…VKNN, and NGQT…NFEL. Disordered regions lie at residues 413–432 and 453–546; these read SPKY…TVPP and APGA…SRGR. Over residues 453-479 the composition is skewed to low complexity; the sequence is APGASSSGTPGPTSGPQGQSQPSAPST. The segment covering 527 to 542 has biased composition (gly residues); that stretch reads PAGGTGGSGGPGGSLG. Phosphoserine is present on Ser-540. At Arg-544 the chain carries Omega-N-methylarginine. In terms of domain architecture, SH3 spans 554–613; that stretch reads VPGRSFMAVKSYQAQGEGEISLSKGEKIKVLSIGEGGFWEGQVKGRVGWFPSDCLEEVAN. Ser-638, Ser-641, Ser-671, and Ser-791 each carry phosphoserine. Positions 663–757 constitute a PDZ domain; that stretch reads TVLLQKKDSE…TLMVKVVMVT (95 aa). The segment at 841-894 is disordered; the sequence is ISASESPGPGGLASLGKHRPKGFFATESSFDPHHRSQPSYDRPSFLPPGPGLML. A Phosphoserine modification is found at Ser-898. Disordered stretches follow at residues 917-1233, 1245-1294, 1308-1417, 1429-1725, 1740-1787, 1842-1866, 1898-1988, and 2002-2029; these read SRSL…LDFT, RREG…SIDE, GGSS…VLRL, RAGL…AGVA, GQAF…DPVT, KLLP…QPQA, PWAR…STRH, and RRAP…LPIL. Pro residues predominate over residues 928-947; the sequence is IPPPPTTSPPEPPYSTPPAP. An Omega-N-methylarginine modification is found at Arg-958. Residues 964–980 show a composition bias toward low complexity; sequence PSSGGPLPASSPSSFDG. A compositionally biased stretch (basic residues) spans 1004-1028; sequence AHHHPPHHHHHHAPPPQPHHHHAHP. Arg-1059 carries the omega-N-methylarginine modification. Low complexity predominate over residues 1064–1085; that stretch reads SPTSGAPSPSHHSSSGGSSGPT. Residues Arg-1098 and Arg-1109 each carry the omega-N-methylarginine modification. 2 stretches are compositionally biased toward low complexity: residues 1132 to 1146 and 1171 to 1184; these read SIPS…ALPR and STSS…GSST. Residues 1203 to 1224 show a composition bias toward pro residues; the sequence is SPAPATSPVPPSPSPVPTPASP. The span at 1245-1256 shows a compositional bias: basic and acidic residues; that stretch reads RREGGWQNEARR. Arg-1257 is subject to Asymmetric dimethylarginine. At Ser-1291 the chain carries Phosphoserine. Residues 1363–1372 show a composition bias toward basic and acidic residues; the sequence is ARERALKESS. The span at 1378–1395 shows a compositional bias: pro residues; sequence PQPPPRPPSPRYDAPPPT. The segment covering 1396–1408 has biased composition (basic residues); that stretch reads LHHHSPHSPHSPH. Arg-1429 is modified (omega-N-methylarginine). Ser-1442 carries the post-translational modification Phosphoserine. Low complexity-rich tracts occupy residues 1459–1469 and 1530–1541; these read PGVGPLLLQLG and RRVLPTSPTSPR. Over residues 1589 to 1615 the composition is skewed to pro residues; the sequence is PLTPGPPHPLPDPPSPATPLPAAPPPA. A compositionally biased stretch (polar residues) spans 1624–1641; the sequence is DSTASSLTSYDSEVATLT. The segment covering 1648–1676 has biased composition (pro residues); that stretch reads PGDPPAPGPPAPAAPAPPAPQPGPDPPPG. Basic and acidic residues predominate over residues 1684–1694; it reads VDSRSSSDHPL. Over residues 1695 to 1708 the composition is skewed to low complexity; sequence ETISSASTLSSLSA. Residues 1709–1724 are compositionally biased toward gly residues; sequence EGGGNTGGVAGGGAGV. Pro residues predominate over residues 1850-1861; that stretch reads PGPPPPPLPGPL. Omega-N-methylarginine is present on Arg-1901. 3 stretches are compositionally biased toward low complexity: residues 1934 to 1945, 1960 to 1985, and 2002 to 2012; these read SQTSLLSKPSSS, TGSG…ASAS, and RRAPSPSLLPA. An omega-N-methylarginine mark is found at Arg-2022, Arg-2042, and Arg-2080. Residues 2104–2167 enclose the SAM domain; it reads WTKFDVADWL…DRALKFFLER (64 aa).

Belongs to the SHANK family. As to quaternary structure, may homomultimerize via its SAM domain. Interacts with the C-terminus of SSTR2 via the PDZ domain. Interacts with SHARPIN, SPTAN1 and DLGAP1/GKAP. Part of a complex with DLG4/PSD-95 and DLGAP1/GKAP. Interacts with BAIAP2. Interacts with IGSF9. Interacts with HOMER1 and HOMER3. As to expression, expressed only in brain (neuropil of cortex, CA1 region hippocampus and molecular layer of cerebellum).

It is found in the cytoplasm. The protein resides in the synapse. It localises to the postsynaptic density. Seems to be an adapter protein in the postsynaptic density (PSD) of excitatory synapses that interconnects receptors of the postsynaptic membrane including NMDA-type and metabotropic glutamate receptors, and the actin-based cytoskeleton. Plays a role in the structural and functional organization of the dendritic spine and synaptic junction. Overexpression promotes maturation of dendritic spines and the enlargement of spine heads via its ability to recruit Homer to postsynaptic sites, and enhances presynaptic function. This chain is SH3 and multiple ankyrin repeat domains protein 1 (Shank1), found in Rattus norvegicus (Rat).